The following is a 682-amino-acid chain: Potassium-transporting ATPase ATP-binding subunit (682 aa).

The next 5 helical transmembrane spans lie at 15-35 (AALF…AKLA), 42-62 (SPVM…TASG), 66-86 (AGFG…GNFA), 233-253 (LTFL…GVTL), and 257-277 (LLIA…LPAI). Catalysis depends on Asp-310, which acts as the 4-aspartylphosphate intermediate. ATP-binding positions include Asp-347, Glu-351, 377–384 (FTAQTRMS), and Lys-395. 2 residues coordinate Mg(2+): Asp-518 and Asp-522. The next 3 helical transmembrane spans lie at 588–608 (FAIL…LNVM), 616–636 (AVLA…PLAL), and 662–682 (VLLP…VLGA).

The protein belongs to the cation transport ATPase (P-type) (TC 3.A.3) family. Type IA subfamily. The system is composed of three essential subunits: KdpA, KdpB and KdpC.

The protein localises to the cell inner membrane. The catalysed reaction is K(+)(out) + ATP + H2O = K(+)(in) + ADP + phosphate + H(+). Its function is as follows. Part of the high-affinity ATP-driven potassium transport (or Kdp) system, which catalyzes the hydrolysis of ATP coupled with the electrogenic transport of potassium into the cytoplasm. This subunit is responsible for energy coupling to the transport system and for the release of the potassium ions to the cytoplasm. This chain is Potassium-transporting ATPase ATP-binding subunit, found in Xanthomonas axonopodis pv. citri (strain 306).